Reading from the N-terminus, the 185-residue chain is Large ribosomal subunit protein bL25 (185 aa).

It belongs to the bacterial ribosomal protein bL25 family. CTC subfamily. Part of the 50S ribosomal subunit; part of the 5S rRNA/L5/L18/L25 subcomplex. Contacts the 5S rRNA. Binds to the 5S rRNA independently of L5 and L18.

In terms of biological role, this is one of the proteins that binds to the 5S RNA in the ribosome where it forms part of the central protuberance. In Laribacter hongkongensis (strain HLHK9), this protein is Large ribosomal subunit protein bL25.